The following is a 149-amino-acid chain: Large ribosomal subunit protein bL9 (149 aa).

It belongs to the bacterial ribosomal protein bL9 family.

Functionally, binds to the 23S rRNA. The chain is Large ribosomal subunit protein bL9 from Tolumonas auensis (strain DSM 9187 / NBRC 110442 / TA 4).